Consider the following 130-residue polypeptide: Small ribosomal subunit protein uS11 (130 aa).

It belongs to the universal ribosomal protein uS11 family. Part of the 30S ribosomal subunit. Interacts with proteins S7 and S18. Binds to IF-3.

Functionally, located on the platform of the 30S subunit, it bridges several disparate RNA helices of the 16S rRNA. Forms part of the Shine-Dalgarno cleft in the 70S ribosome. The polypeptide is Small ribosomal subunit protein uS11 (Prochlorococcus marinus (strain MIT 9215)).